The chain runs to 393 residues: STE20-related kinase adapter protein alpha (393 aa).

Phosphoserine occurs at positions 2 and 9. Residues 32 to 341 form the Protein kinase domain; that stretch reads YELLSVIGKG…ASTLLNHSFF (310 aa). T381 carries the phosphothreonine; by LKB1 modification.

The protein belongs to the protein kinase superfamily. STE Ser/Thr protein kinase family. STE20 subfamily. Component of a trimeric complex composed of STK11/LKB1, STRAD (STRADA or STRADB) and CAB39/MO25 (CAB39/MO25alpha or CAB39L/MO25beta): the complex tethers STK11/LKB1 in the cytoplasm and stimulates its catalytic activity. Expressed in liver.

The protein localises to the nucleus. It is found in the cytoplasm. In terms of biological role, pseudokinase which, in complex with CAB39/MO25 (CAB39/MO25alpha or CAB39L/MO25beta), binds to and activates STK11/LKB1. Adopts a closed conformation typical of active protein kinases and binds STK11/LKB1 as a pseudosubstrate, promoting conformational change of STK11/LKB1 in an active conformation. This chain is STE20-related kinase adapter protein alpha (Strada), found in Rattus norvegicus (Rat).